Reading from the N-terminus, the 128-residue chain is Protein ripply2 (128 aa).

Positions 1 to 64 (MDTTESAESA…ALPSGPGMAE (64 aa)) are disordered. Low complexity predominate over residues 17-28 (PSRSRCPPSAQP). A WRPW motif motif is present at residues 34 to 37 (WRPW). A ripply homology domain region spans residues 74–109 (HPVRLFWPKSKCYDYLYQEAETLLKNFPIQATISFY).

Belongs to the ripply family. Expressed in the embryonic anterior presomitic mesoderm. First expressed in S-I at 8.5 dpc, where expression is maintained until 13.5 dpc, with an additional stripe of expression sometimes seen in the rostral part of S0 and S-I.

Its subcellular location is the nucleus. Plays a role in somitogenesis. Required for somite segregation and establishment of rostrocaudal polarity in somites. The chain is Protein ripply2 from Mus musculus (Mouse).